A 717-amino-acid chain; its full sequence is CRISPR-associated protein Cas8b (717 aa).

Disordered stretches follow at residues 263-283 (IGVF…DQSW) and 698-717 (HEKE…STTN). Residues 701–717 (EDEDDQDTEEPAESTTN) show a composition bias toward acidic residues.

The protein localises to the cytoplasm. Functionally, CRISPR (clustered regularly interspaced short palindromic repeat) is an adaptive immune system that provides protection against mobile genetic elements (viruses, transposable elements and conjugative plasmids). CRISPR clusters contain sequences complementary to antecedent mobile elements and target invading nucleic acids. CRISPR clusters are transcribed and processed into CRISPR RNA (crRNA). Plasmid targeted by CRISPR locus P1 transform wild-type cells very poorly. This subunit might be involved in stabilizing crRNA. This Haloferax volcanii (strain ATCC 29605 / DSM 3757 / JCM 8879 / NBRC 14742 / NCIMB 2012 / VKM B-1768 / DS2) (Halobacterium volcanii) protein is CRISPR-associated protein Cas8b.